The following is a 276-amino-acid chain: Proteasome subunit beta type-8 (276 aa).

The segment at 1–33 (MALLDVCGAPRGQRPESALPVAGSGRRSDPGHY) is disordered. A propeptide spans 1-72 (MALLDVCGAP…RNVQIEMAHG (72 aa)) (removed in mature form). Aspartate 5 is subject to Phosphothreonine. Threonine 73 acts as the Nucleophile in catalysis.

It belongs to the peptidase T1B family. The 26S proteasome consists of a 20S proteasome core and two 19S regulatory subunits. The 20S proteasome core is composed of 28 subunits that are arranged in four stacked rings, resulting in a barrel-shaped structure. The two end rings are each formed by seven alpha subunits, and the two central rings are each formed by seven beta subunits. The catalytic chamber with the active sites is on the inside of the barrel. Component of the immunoproteasome, where it displaces the equivalent housekeeping subunit PSMB5. Component of the spermatoproteasome, a form of the proteasome specifically found in testis. Directly interacts with POMP. Interacts with TAP1. In terms of assembly, (Microbial infection) Interacts with HIV-1 TAT protein. Autocleaved. The resulting N-terminal Thr residue of the mature subunit is responsible for the nucleophile proteolytic activity.

Its subcellular location is the cytoplasm. The protein resides in the nucleus. It carries out the reaction Cleavage of peptide bonds with very broad specificity.. In terms of biological role, the proteasome is a multicatalytic proteinase complex which is characterized by its ability to cleave peptides with Arg, Phe, Tyr, Leu, and Glu adjacent to the leaving group at neutral or slightly basic pH. The proteasome has an ATP-dependent proteolytic activity. This subunit is involved in antigen processing to generate class I binding peptides. Replacement of PSMB5 by PSMB8 increases the capacity of the immunoproteasome to cleave model peptides after hydrophobic and basic residues. Involved in the generation of spliced peptides resulting from the ligation of two separate proteasomal cleavage products that are not contiguous in the parental protein. Acts as a major component of interferon gamma-induced sensitivity. Plays a key role in apoptosis via the degradation of the apoptotic inhibitor MCL1. May be involved in the inflammatory response pathway. In cancer cells, substitution of isoform 1 (E2) by isoform 2 (E1) results in immunoproteasome deficiency. Required for the differentiation of preadipocytes into adipocytes. The sequence is that of Proteasome subunit beta type-8 (PSMB8) from Homo sapiens (Human).